The following is a 546-amino-acid chain: Chaperonin GroEL (546 aa).

Residues 30 to 33 (TLGP), Lys-51, 87 to 91 (DGTTT), Gly-415, and Asp-497 each bind ATP. The interval 527-546 (PKKDSPAPAMPGGGMGGMDF) is disordered. Gly residues predominate over residues 537-546 (PGGGMGGMDF).

It belongs to the chaperonin (HSP60) family. As to quaternary structure, forms a cylinder of 14 subunits composed of two heptameric rings stacked back-to-back. Interacts with the co-chaperonin GroES.

It localises to the cytoplasm. The enzyme catalyses ATP + H2O + a folded polypeptide = ADP + phosphate + an unfolded polypeptide.. In terms of biological role, together with its co-chaperonin GroES, plays an essential role in assisting protein folding. The GroEL-GroES system forms a nano-cage that allows encapsulation of the non-native substrate proteins and provides a physical environment optimized to promote and accelerate protein folding. The sequence is that of Chaperonin GroEL from Methylorubrum populi (strain ATCC BAA-705 / NCIMB 13946 / BJ001) (Methylobacterium populi).